We begin with the raw amino-acid sequence, 131 residues long: Sperm microtubule inner protein 11 (131 aa).

The interval Lys18–Gly44 is disordered. Residues Asn21 to Pro33 are compositionally biased toward basic and acidic residues.

Microtubule inner protein component of sperm flagellar doublet microtubules.

It localises to the cytoplasm. The protein localises to the cytoskeleton. The protein resides in the flagellum axoneme. In terms of biological role, microtubule inner protein (MIP) part of the dynein-decorated doublet microtubules (DMTs) in flagellum axoneme. May serve to reinforce and thus stabilize the microtubule structure in the sperm flagella. This Homo sapiens (Human) protein is Sperm microtubule inner protein 11.